The chain runs to 807 residues: MSVIEEKCNESSYSADSIKVLKGLEAVRKRPGMYIGDVGDGSGLHHMIYEVVDNSIDEALAGYCDLVQVTLNKNGSVTVSDNGRGIPVEIHEEEGISAAEVIMTQLHAGGKFDQQSYKISGGLHGVGVSVVNALSEWLELRIWRNNKEYFIRFNNGITEAPLSIVKENIDKKGTEVTFFPSVGTFTNIEFDFVTIEHRLRELAFLNSGVKILLVDNRFEEVKKVEFYYTGGIEAYVQYIDRAKHAIHPCIVVNTVHVESGISLELALHWNDSYHENILCFTNNIRQRDGGTHLSAFKSAITRVITSYLDTTGLNKKTKHDFSGEDTREGICCVLSVKVPDPKFSSQTKDKLVSSEVRPVVENAVYTKVLEWFEEHPTEAKAIIAKIMEAANAREAARKARELTRRKSALEVSNLPGKLADCHAKDPAISELFIVEGDSAGGTAKQGRDSKIQAILPLRGKILNVERARFDKMLGSDQIGTLITALGISVEREFSLEKLRYHKVIIMTDADVDGSHIRALLLTFFYRHMPELINKGYLYIAQPPLYKVKSGASELYLKNEKALQNYLIKSTINDTYLILDGQEQLVGENLEDLINKVVKFNNLLDHVSKKFNRSITEILAINDLFNKKIFEPESSARLQKALDILNNLEESPDKTNLQVLKHENKIEFFHFSRGLKETKILLKEQLELFEFVEISQFALSIFDIFSKRLKLIVKSKAFDILTPSQLLNTIIECGKKGITIQRFKGLGEMNSDQLWETTLDPTKRTLLQVRVAEVDEAEGIFSTLMGDVVEPRRLFIQANALNVMNLDV.

A Toprim domain is found at 429-543; it reads SELFIVEGDS…KGYLYIAQPP (115 aa). Mg(2+) contacts are provided by glutamate 435, aspartate 508, and aspartate 510.

The protein belongs to the type II topoisomerase GyrB family. As to quaternary structure, heterotetramer, composed of two GyrA and two GyrB chains. In the heterotetramer, GyrA contains the active site tyrosine that forms a transient covalent intermediate with DNA, while GyrB binds cofactors and catalyzes ATP hydrolysis. The cofactor is Mg(2+). Mn(2+) serves as cofactor. It depends on Ca(2+) as a cofactor.

It localises to the cytoplasm. It catalyses the reaction ATP-dependent breakage, passage and rejoining of double-stranded DNA.. In terms of biological role, a type II topoisomerase that negatively supercoils closed circular double-stranded (ds) DNA in an ATP-dependent manner to modulate DNA topology and maintain chromosomes in an underwound state. Negative supercoiling favors strand separation, and DNA replication, transcription, recombination and repair, all of which involve strand separation. Also able to catalyze the interconversion of other topological isomers of dsDNA rings, including catenanes and knotted rings. Type II topoisomerases break and join 2 DNA strands simultaneously in an ATP-dependent manner. The chain is DNA gyrase subunit B from Rickettsia prowazekii (strain Madrid E).